We begin with the raw amino-acid sequence, 226 residues long: Isoprenyl transferase (226 aa).

Asp-12 is a catalytic residue. Mg(2+) is bound at residue Asp-12. Substrate is bound by residues 13–16, Trp-17, Lys-25, His-29, and 57–59; these read GNAR and SSE. Asn-60 functions as the Proton acceptor in the catalytic mechanism. Substrate is bound by residues Trp-61, Arg-63, Arg-174, and 180–182; that span reads RIS. Glu-193 serves as a coordination point for Mg(2+).

Belongs to the UPP synthase family. In terms of assembly, homodimer. Mg(2+) is required as a cofactor.

Functionally, catalyzes the condensation of isopentenyl diphosphate (IPP) with allylic pyrophosphates generating different type of terpenoids. The polypeptide is Isoprenyl transferase (Rickettsia typhi (strain ATCC VR-144 / Wilmington)).